Consider the following 1682-residue polypeptide: Cilia- and flagella-associated protein 43 (1682 aa).

WD repeat units follow at residues 168–207 (NPGMDVSQMSFNPMNWHQMCLSSSSAMSVWTIERSNQEHH), 262–305 (PKDD…VTVL), 315–354 (DGAPLINPLTLVYQKDGILASGIDGVIYSFIIKDSKYQVK), 358–397 (EFDGPVTHLVFSPSYKMLLIQTDKGSVYIYTFGAEMPLDK), 488–527 (LSQSPVKIVTYDQRGIFLLVGTEEGNIFVIDARPSKSFQI), and 697–738 (SHQG…ANIA). Residues 767-790 (RESTNEQQEETTESQKHLNSDSSE) are disordered. 2 coiled-coil regions span residues 926 to 960 (KERTEEELQELSKVMQQKKTEIECLKLRKEIVEVQ) and 1171 to 1223 (SEDE…HLKR).

It belongs to the CFAP43 family. As to expression, expressed in testis. Expressed in the lung, brain, oviduct and nasal cavity.

It is found in the cell projection. Its subcellular location is the cilium. It localises to the flagellum. The protein localises to the cytoplasm. The protein resides in the cytoskeleton. It is found in the flagellum axoneme. Its subcellular location is the cilium axoneme. In terms of biological role, flagellar protein involved in sperm flagellum axoneme organization and function. Involved in the regulation of the beating frequency of motile cilia on the epithelial cells of the respiratory tract. The protein is Cilia- and flagella-associated protein 43 of Mus musculus (Mouse).